The following is a 277-amino-acid chain: MNTSNQHKAGHVTTRKLLDMKQQGEKISVLTAYDYTMARILDRAGIDVILVGDSASNVFSGHATTLPITIEEMIYHAKAVVRGVHDESGRAMVVVDMPFMSYQISGDEALRNAGKIMKEHGCDALKLEGGKIIADTVKRITDVGIPVMGHLGLMPQSIYKYGSYKVRAQEEQEAEQLLQDARLLEEAGAFAVVLEKIPSALAAEVTLMLTIPTIGIGAGSHCDGQVLVVNDILGLNREFHPRFVRQYANLNNVIDRAVQQYVDDVKQGGFPADDESY.

Residues aspartate 53 and aspartate 96 each coordinate Mg(2+). Residues 53 to 54 (DS), aspartate 96, and lysine 126 each bind 3-methyl-2-oxobutanoate. Glutamate 128 serves as a coordination point for Mg(2+). The active-site Proton acceptor is the glutamate 195.

It belongs to the PanB family. Homodecamer; pentamer of dimers. The cofactor is Mg(2+).

The protein resides in the cytoplasm. The enzyme catalyses 3-methyl-2-oxobutanoate + (6R)-5,10-methylene-5,6,7,8-tetrahydrofolate + H2O = 2-dehydropantoate + (6S)-5,6,7,8-tetrahydrofolate. The protein operates within cofactor biosynthesis; (R)-pantothenate biosynthesis; (R)-pantoate from 3-methyl-2-oxobutanoate: step 1/2. Its function is as follows. Catalyzes the reversible reaction in which hydroxymethyl group from 5,10-methylenetetrahydrofolate is transferred onto alpha-ketoisovalerate to form ketopantoate. This chain is 3-methyl-2-oxobutanoate hydroxymethyltransferase, found in Chlorobium phaeobacteroides (strain DSM 266 / SMG 266 / 2430).